The following is a 228-amino-acid chain: Ribose-5-phosphate isomerase A (228 aa).

Substrate contacts are provided by residues 26–29 (SGST), 81–84 (DGAD), and 94–97 (KGGG). The active-site Proton acceptor is E103. K121 contacts substrate.

Belongs to the ribose 5-phosphate isomerase family. As to quaternary structure, homodimer.

It carries out the reaction aldehydo-D-ribose 5-phosphate = D-ribulose 5-phosphate. It functions in the pathway carbohydrate degradation; pentose phosphate pathway; D-ribose 5-phosphate from D-ribulose 5-phosphate (non-oxidative stage): step 1/1. Catalyzes the reversible conversion of ribose-5-phosphate to ribulose 5-phosphate. The chain is Ribose-5-phosphate isomerase A from Shouchella clausii (strain KSM-K16) (Alkalihalobacillus clausii).